Consider the following 67-residue polypeptide: Large ribosomal subunit protein uL29 (67 aa).

This sequence belongs to the universal ribosomal protein uL29 family.

The protein is Large ribosomal subunit protein uL29 (rpmC) of Thermus thermophilus.